We begin with the raw amino-acid sequence, 449 residues long: NADP-specific glutamate dehydrogenase (449 aa).

K125 is a catalytic residue.

Belongs to the Glu/Leu/Phe/Val dehydrogenases family. In terms of assembly, homohexamer.

The enzyme catalyses L-glutamate + NADP(+) + H2O = 2-oxoglutarate + NH4(+) + NADPH + H(+). The chain is NADP-specific glutamate dehydrogenase from Giardia intestinalis (Giardia lamblia).